Reading from the N-terminus, the 652-residue chain is Na(+)/H(+) antiporter NhaA 3 (652 aa).

Residues 1–428 (MTGEIPRGRR…GASLTTWLVF (428 aa)) form a na(+)/H(+) antiporter NhaA region. The next 11 membrane-spanning stretches (helical) occupy residues 32-52 (ETGS…WVNL), 78-98 (LRFW…GLEV), 114-134 (MLPL…YLAF), 142-162 (VGWG…LAVL), 173-193 (FLLT…AIAY), 200-220 (MALF…AAGV), 227-249 (LLLG…VVGL), 306-326 (HPWA…GVVV), 342-362 (GVLF…SMLV), 376-396 (WAAI…ALLI), and 411-431 (VGIL…FRLA). The Thioredoxin domain maps to 429–623 (RLAARLAPAR…LSAAVMSAFA (195 aa)). Residues 626–652 (RLRPEGGREPDHRSEAGSEQPDEEPGT) are disordered. A compositionally biased stretch (basic and acidic residues) spans 627–641 (LRPEGGREPDHRSEA).

In the N-terminal section; belongs to the NhaA Na(+)/H(+) (TC 2.A.33) antiporter family.

The protein localises to the cell membrane. The catalysed reaction is Na(+)(in) + 2 H(+)(out) = Na(+)(out) + 2 H(+)(in). Its function is as follows. Na(+)/H(+) antiporter that extrudes sodium in exchange for external protons. In Salinispora tropica (strain ATCC BAA-916 / DSM 44818 / JCM 13857 / NBRC 105044 / CNB-440), this protein is Na(+)/H(+) antiporter NhaA 3.